We begin with the raw amino-acid sequence, 309 residues long: Large ribosomal subunit protein mL45 (309 aa).

This sequence belongs to the mitochondrion-specific ribosomal protein mL45 family. In terms of assembly, component of the mitochondrial ribosome large subunit (39S) which comprises a 16S rRNA and about 50 distinct proteins.

It localises to the mitochondrion. Component of the mitochondrial large ribosomal subunit (mt-LSU). Within the mitochondrial ribosomes, required to direct the nascent polypeptide toward the tunnel exit and position the exit at a distance from the membrane surface. The protein is Large ribosomal subunit protein mL45 (mrpl45) of Xenopus laevis (African clawed frog).